Consider the following 388-residue polypeptide: 1-deoxy-D-xylulose 5-phosphate reductoisomerase (388 aa).

Threonine 15, glycine 16, serine 17, isoleucine 18, and asparagine 127 together coordinate NADPH. Lysine 128 contacts 1-deoxy-D-xylulose 5-phosphate. Position 129 (glutamate 129) interacts with NADPH. Aspartate 153 contacts Mn(2+). Residues serine 154, glutamate 155, serine 179, and histidine 202 each coordinate 1-deoxy-D-xylulose 5-phosphate. Glutamate 155 provides a ligand contact to Mn(2+). Residue glycine 208 coordinates NADPH. Positions 215, 220, 221, and 224 each coordinate 1-deoxy-D-xylulose 5-phosphate. Mn(2+) is bound at residue glutamate 224.

Belongs to the DXR family. It depends on Mg(2+) as a cofactor. Mn(2+) is required as a cofactor.

The catalysed reaction is 2-C-methyl-D-erythritol 4-phosphate + NADP(+) = 1-deoxy-D-xylulose 5-phosphate + NADPH + H(+). Its pathway is isoprenoid biosynthesis; isopentenyl diphosphate biosynthesis via DXP pathway; isopentenyl diphosphate from 1-deoxy-D-xylulose 5-phosphate: step 1/6. Catalyzes the NADPH-dependent rearrangement and reduction of 1-deoxy-D-xylulose-5-phosphate (DXP) to 2-C-methyl-D-erythritol 4-phosphate (MEP). In Bacteroides fragilis (strain ATCC 25285 / DSM 2151 / CCUG 4856 / JCM 11019 / LMG 10263 / NCTC 9343 / Onslow / VPI 2553 / EN-2), this protein is 1-deoxy-D-xylulose 5-phosphate reductoisomerase.